The chain runs to 319 residues: Ferrochelatase (319 aa).

Fe cation contacts are provided by histidine 194 and glutamate 275.

This sequence belongs to the ferrochelatase family.

Its subcellular location is the cytoplasm. It carries out the reaction heme b + 2 H(+) = protoporphyrin IX + Fe(2+). It functions in the pathway porphyrin-containing compound metabolism; protoheme biosynthesis; protoheme from protoporphyrin-IX: step 1/1. Functionally, catalyzes the ferrous insertion into protoporphyrin IX. This Vibrio vulnificus (strain CMCP6) protein is Ferrochelatase.